The following is a 264-amino-acid chain: tRNA pseudouridine synthase A (264 aa).

Asp51 serves as the catalytic Nucleophile. Substrate is bound at residue Tyr109.

The protein belongs to the tRNA pseudouridine synthase TruA family. Homodimer.

It catalyses the reaction uridine(38/39/40) in tRNA = pseudouridine(38/39/40) in tRNA. Formation of pseudouridine at positions 38, 39 and 40 in the anticodon stem and loop of transfer RNAs. The polypeptide is tRNA pseudouridine synthase A (Vibrio cholerae serotype O1 (strain ATCC 39541 / Classical Ogawa 395 / O395)).